The primary structure comprises 87 residues: U14-lycotoxin-Ls1a (87 aa).

An N-terminal signal peptide occupies residues methionine 1–serine 20. In terms of domain architecture, WAP spans glutamate 21–serine 66. Cystine bridges form between cysteine 24/cysteine 54, cysteine 32/cysteine 58, cysteine 41/cysteine 53, cysteine 42/cysteine 80, and cysteine 47/cysteine 62.

This sequence belongs to the venom protein 11 family. 01 (wap-1) subfamily. In terms of processing, contains 5 disulfide bonds. In terms of tissue distribution, expressed by the venom gland.

The protein localises to the secreted. Functionally, has antibacterial activity. The polypeptide is U14-lycotoxin-Ls1a (Lycosa singoriensis (Wolf spider)).